The chain runs to 485 residues: Proline--tRNA ligase (485 aa).

The protein belongs to the class-II aminoacyl-tRNA synthetase family. ProS type 3 subfamily. As to quaternary structure, homodimer.

It localises to the cytoplasm. It carries out the reaction tRNA(Pro) + L-proline + ATP = L-prolyl-tRNA(Pro) + AMP + diphosphate. Functionally, catalyzes the attachment of proline to tRNA(Pro) in a two-step reaction: proline is first activated by ATP to form Pro-AMP and then transferred to the acceptor end of tRNA(Pro). This is Proline--tRNA ligase from Methanopyrus kandleri (strain AV19 / DSM 6324 / JCM 9639 / NBRC 100938).